Consider the following 588-residue polypeptide: Glutamyl-tRNA(Gln) amidotransferase subunit B, mitochondrial (588 aa).

Residues 1-109 constitute a mitochondrion transit peptide; the sequence is MLRSWIGSGT…RAPTSTSETP (109 aa). Low complexity predominate over residues 22-35; it reads SSLPSPKASFSSAP. Residues 22 to 50 form a disordered region; the sequence is SSLPSPKASFSSAPNRYLQPPTSADRVPL.

It belongs to the GatB/GatE family. GatB subfamily. In terms of assembly, subunit of the heterotrimeric GatCAB amidotransferase (AdT) complex, composed of A, B and C subunits.

The protein localises to the mitochondrion. It carries out the reaction L-glutamyl-tRNA(Gln) + L-glutamine + ATP + H2O = L-glutaminyl-tRNA(Gln) + L-glutamate + ADP + phosphate + H(+). Its function is as follows. Allows the formation of correctly charged Gln-tRNA(Gln) through the transamidation of misacylated Glu-tRNA(Gln) in the mitochondria. The reaction takes place in the presence of glutamine and ATP through an activated gamma-phospho-Glu-tRNA(Gln). The sequence is that of Glutamyl-tRNA(Gln) amidotransferase subunit B, mitochondrial from Penicillium rubens (strain ATCC 28089 / DSM 1075 / NRRL 1951 / Wisconsin 54-1255) (Penicillium chrysogenum).